The chain runs to 152 residues: UPF0266 membrane protein Ent638_2389 (152 aa).

Helical transmembrane passes span 6-26 (IVLV…EFIM), 45-65 (VDAF…VMSQ), and 67-87 (ALLT…LFWI).

It belongs to the UPF0266 family.

Its subcellular location is the cell inner membrane. The chain is UPF0266 membrane protein Ent638_2389 from Enterobacter sp. (strain 638).